A 294-amino-acid chain; its full sequence is Acetylglutamate kinase (294 aa).

Substrate-binding positions include 69–70 (GG), Arg-91, and Asn-190.

The protein belongs to the acetylglutamate kinase family. ArgB subfamily.

The protein resides in the cytoplasm. The catalysed reaction is N-acetyl-L-glutamate + ATP = N-acetyl-L-glutamyl 5-phosphate + ADP. It functions in the pathway amino-acid biosynthesis; L-arginine biosynthesis; N(2)-acetyl-L-ornithine from L-glutamate: step 2/4. In terms of biological role, catalyzes the ATP-dependent phosphorylation of N-acetyl-L-glutamate. The chain is Acetylglutamate kinase from Mycobacterium bovis (strain ATCC BAA-935 / AF2122/97).